We begin with the raw amino-acid sequence, 20 residues long: Dahlein-5.1 (20 aa).

In terms of tissue distribution, expressed by the skin dorsal glands.

Its subcellular location is the secreted. Its function is as follows. Has no antimicrobial activity. Strongly inhibits the formation of NO by neuronal nitric oxide synthase at micromolar concentrations. Acts by a non-competitive mechanism, probably by binding to calcium/calmodulin and as a consequence blocking calmodulin attachment to nNOS. The protein is Dahlein-5.1 of Ranoidea dahlii (Dahl's aquatic frog).